The following is a 109-amino-acid chain: Putative pterin-4-alpha-carbinolamine dehydratase (109 aa).

Belongs to the pterin-4-alpha-carbinolamine dehydratase family.

It catalyses the reaction (4aS,6R)-4a-hydroxy-L-erythro-5,6,7,8-tetrahydrobiopterin = (6R)-L-erythro-6,7-dihydrobiopterin + H2O. This is Putative pterin-4-alpha-carbinolamine dehydratase from Rickettsia canadensis (strain McKiel).